Consider the following 512-residue polypeptide: RCC1 domain-containing protein DDB_G0279253 (512 aa).

8 RCC1 repeats span residues 1–56, 58–134, 135–185, 197–248, 249–319, 321–384, 386–443, and 454–512; these read MKIY…MIID, GDLY…ACDN, NGNI…NNNN, SGGV…ALSS, ENDV…LLDI, FKNV…LLTN, DKLY…IQVY, and NNNI…FILP. The span at 66–77 shows a compositional bias: polar residues; that stretch reads NDSGQLGINSNE. Disordered stretches follow at residues 66-85 and 162-200; these read NDSGQLGINSNEQQQQQQQQ and STSNNKNNNNNNNNNNNNNNNNNNNNNNNNNNNNNSGGV. The segment covering 162-196 has biased composition (low complexity); sequence STSNNKNNNNNNNNNNNNNNNNNNNNNNNNNNNNN.

This Dictyostelium discoideum (Social amoeba) protein is RCC1 domain-containing protein DDB_G0279253.